The primary structure comprises 101 residues: NADH-quinone oxidoreductase subunit K (101 aa).

Helical transmembrane passes span 2-22, 29-49, and 63-83; these read ISLN…LVGV, IMLF…LVAI, and MFII…LILW.

This sequence belongs to the complex I subunit 4L family. In terms of assembly, NDH-1 is composed of 14 different subunits. Subunits NuoA, H, J, K, L, M, N constitute the membrane sector of the complex.

Its subcellular location is the cell inner membrane. It catalyses the reaction a quinone + NADH + 5 H(+)(in) = a quinol + NAD(+) + 4 H(+)(out). In terms of biological role, NDH-1 shuttles electrons from NADH, via FMN and iron-sulfur (Fe-S) centers, to quinones in the respiratory chain. The immediate electron acceptor for the enzyme in this species is believed to be ubiquinone. Couples the redox reaction to proton translocation (for every two electrons transferred, four hydrogen ions are translocated across the cytoplasmic membrane), and thus conserves the redox energy in a proton gradient. This chain is NADH-quinone oxidoreductase subunit K, found in Campylobacter hominis (strain ATCC BAA-381 / DSM 21671 / CCUG 45161 / LMG 19568 / NCTC 13146 / CH001A).